The primary structure comprises 142 residues: Large ribosomal subunit protein uL29 (142 aa).

This sequence belongs to the universal ribosomal protein uL29 family.

This Theileria annulata protein is Large ribosomal subunit protein uL29 (RPL35).